A 397-amino-acid polypeptide reads, in one-letter code: Chorismate synthase (397 aa).

NADP(+) is bound by residues Arg40 and Arg46. FMN is bound by residues 129–131 (RSS), 257–258 (QA), Gly302, 317–321 (KPISS), and Arg343.

This sequence belongs to the chorismate synthase family. Homotetramer. It depends on FMNH2 as a cofactor.

It catalyses the reaction 5-O-(1-carboxyvinyl)-3-phosphoshikimate = chorismate + phosphate. It functions in the pathway metabolic intermediate biosynthesis; chorismate biosynthesis; chorismate from D-erythrose 4-phosphate and phosphoenolpyruvate: step 7/7. In terms of biological role, catalyzes the anti-1,4-elimination of the C-3 phosphate and the C-6 proR hydrogen from 5-enolpyruvylshikimate-3-phosphate (EPSP) to yield chorismate, which is the branch point compound that serves as the starting substrate for the three terminal pathways of aromatic amino acid biosynthesis. This reaction introduces a second double bond into the aromatic ring system. The chain is Chorismate synthase from Chlorobium luteolum (strain DSM 273 / BCRC 81028 / 2530) (Pelodictyon luteolum).